Reading from the N-terminus, the 235-residue chain is Coiled-coil domain-containing protein 71L (235 aa).

Over residues 1–13 (MRRSMKRRRRRRP) the composition is skewed to basic residues. A disordered region spans residues 1-30 (MRRSMKRRRRRRPVAPATAARGGDFRAEDG). Ser-52 and Ser-89 each carry phosphoserine. A disordered region spans residues 109 to 167 (PDPPGPPTARGQARRPVPRAAARRRRRGARAAAARRRKPRPPPPPPPPPEESCPAKPVA). The segment covering 120–148 (QARRPVPRAAARRRRRGARAAAARRRKPR) has biased composition (basic residues). Residues 149 to 159 (PPPPPPPPPEE) show a composition bias toward pro residues. The residue at position 185 (Thr-185) is a Phosphothreonine. Residue Ser-198 is modified to Phosphoserine.

In Homo sapiens (Human), this protein is Coiled-coil domain-containing protein 71L (CCDC71L).